Consider the following 404-residue polypeptide: Histidine--tRNA ligase (404 aa).

It belongs to the class-II aminoacyl-tRNA synthetase family.

Its subcellular location is the cytoplasm. The catalysed reaction is tRNA(His) + L-histidine + ATP = L-histidyl-tRNA(His) + AMP + diphosphate + H(+). The polypeptide is Histidine--tRNA ligase (Nanoarchaeum equitans (strain Kin4-M)).